The chain runs to 97 residues: MEFKHVLMILGVIILTLAPLIMYSGLGEDEGYFGGADGAAGDLIMEISPNYEPWFEPFWEPPSGEIESLLFALQAAIGAMIIGYFFGYNKAKYDDKN.

2 consecutive transmembrane segments (helical) span residues 6 to 26 (VLMI…YSGL) and 68 to 88 (SLLF…FFGY).

It belongs to the CbiN family. Forms an energy-coupling factor (ECF) transporter complex composed of an ATP-binding protein (A component, CbiO), a transmembrane protein (T component, CbiQ) and 2 possible substrate-capture proteins (S components, CbiM and CbiN) of unknown stoichimetry.

It localises to the cell membrane. Its pathway is cofactor biosynthesis; adenosylcobalamin biosynthesis. Functionally, part of the energy-coupling factor (ECF) transporter complex CbiMNOQ involved in cobalt import. The sequence is that of Cobalt transport protein CbiN from Methanococcus maripaludis (strain C6 / ATCC BAA-1332).